A 359-amino-acid polypeptide reads, in one-letter code: 3-dehydroquinate synthase (359 aa).

NAD(+) is bound by residues 71-76 (DGEAYK), 105-109 (GVIGD), 129-130 (TT), Lys142, and Lys151. Zn(2+) is bound by residues Glu184, His247, and His264.

The protein belongs to the sugar phosphate cyclases superfamily. Dehydroquinate synthase family. Requires Co(2+) as cofactor. Zn(2+) serves as cofactor. It depends on NAD(+) as a cofactor.

The protein resides in the cytoplasm. The enzyme catalyses 7-phospho-2-dehydro-3-deoxy-D-arabino-heptonate = 3-dehydroquinate + phosphate. The protein operates within metabolic intermediate biosynthesis; chorismate biosynthesis; chorismate from D-erythrose 4-phosphate and phosphoenolpyruvate: step 2/7. Catalyzes the conversion of 3-deoxy-D-arabino-heptulosonate 7-phosphate (DAHP) to dehydroquinate (DHQ). In Burkholderia ambifaria (strain MC40-6), this protein is 3-dehydroquinate synthase.